We begin with the raw amino-acid sequence, 549 residues long: MKNINPTHTHAWKSLEAHKAELSNITIQDLFKQEKNRFDDYSLTFNNQILIDFSKNNINQTTLSHLRQLAQECALDSAKEAMFTGEKINRTENRAVLHTALRNRTNTPVLVDGKDVMPEVNAVLAKMKDFCQRIISGEWKGYTGKAITDVVNIGIGGSDLGPYMVTEALRPYKNHLNMHFVSNVDGTHIAETLKKVNPETTLFLVASKTFTTQETMTNAQSARDWLLKAAKDESAVAKHFAALSTNAKDVEKFGIDTNNMFEFWDWVGGRYSLWSAIGLSIALSIGFENFEALLNGAHEMDKHFLSTPIEQNIPTTLALVGLWNTNFLGAQTEAILPYDQYLHRFAAYFQQGNMESNGKYVDRDGNVIKNYQTGPIIWGEPGTNGQHAFYQLIHQGTTLIPCDFIAPAQRHNPLADHHNKLLSNFFAQTEALAFGKTKEEVEAEFVKAGKSLDDVKNIVPFKVFTGNKPTNSILVQKITPFTLGALIAMYEHKIFVQGVIFNIFSFDQWGVELGKQLANRILPELTDSEKVASHDSSTNGLINQFKAWR.

The active-site Proton donor is E355. Active-site residues include H387 and K515.

The protein belongs to the GPI family.

The protein localises to the cytoplasm. It catalyses the reaction alpha-D-glucose 6-phosphate = beta-D-fructose 6-phosphate. The protein operates within carbohydrate biosynthesis; gluconeogenesis. It functions in the pathway carbohydrate degradation; glycolysis; D-glyceraldehyde 3-phosphate and glycerone phosphate from D-glucose: step 2/4. Catalyzes the reversible isomerization of glucose-6-phosphate to fructose-6-phosphate. The polypeptide is Glucose-6-phosphate isomerase (Haemophilus influenzae (strain ATCC 51907 / DSM 11121 / KW20 / Rd)).